We begin with the raw amino-acid sequence, 235 residues long: Elongation factor Tu, chloroplastic (235 aa).

One can recognise a tr-type G domain in the interval 1–125 (KNMITGAAQM…EVDNYIPLPT (125 aa)). A GTP-binding site is contributed by 47–50 (NKAD).

It belongs to the TRAFAC class translation factor GTPase superfamily. Classic translation factor GTPase family. EF-Tu/EF-1A subfamily.

Its subcellular location is the plastid. It localises to the chloroplast. It catalyses the reaction GTP + H2O = GDP + phosphate + H(+). Its function is as follows. GTP hydrolase that promotes the GTP-dependent binding of aminoacyl-tRNA to the A-site of ribosomes during protein biosynthesis. The polypeptide is Elongation factor Tu, chloroplastic (tufA) (Bryopsis plumosa (Green alga)).